Consider the following 379-residue polypeptide: Cytochrome b (379 aa).

4 helical membrane-spanning segments follow: residues 33 to 53 (FGSL…FLAM), 77 to 98 (WTIR…FIHV), 113 to 133 (WNVG…GYVL), and 178 to 198 (FFAL…IHLL). Heme b is bound by residues His83 and His97. 2 residues coordinate heme b: His182 and His196. His201 serves as a coordination point for a ubiquinone. 4 consecutive transmembrane segments (helical) span residues 226-246 (TKDF…TLFY), 288-308 (LGGV…PLLQ), 320-340 (LSQF…WIGG), and 347-367 (FITI…LIMP).

It belongs to the cytochrome b family. As to quaternary structure, the cytochrome bc1 complex contains 11 subunits: 3 respiratory subunits (MT-CYB, CYC1 and UQCRFS1), 2 core proteins (UQCRC1 and UQCRC2) and 6 low-molecular weight proteins (UQCRH/QCR6, UQCRB/QCR7, UQCRQ/QCR8, UQCR10/QCR9, UQCR11/QCR10 and a cleavage product of UQCRFS1). This cytochrome bc1 complex then forms a dimer. The cofactor is heme b.

The protein resides in the mitochondrion inner membrane. Its function is as follows. Component of the ubiquinol-cytochrome c reductase complex (complex III or cytochrome b-c1 complex) that is part of the mitochondrial respiratory chain. The b-c1 complex mediates electron transfer from ubiquinol to cytochrome c. Contributes to the generation of a proton gradient across the mitochondrial membrane that is then used for ATP synthesis. This chain is Cytochrome b (MT-CYB), found in Lepilemur edwardsi (Milne-Edwards's sportive lemur).